A 738-amino-acid polypeptide reads, in one-letter code: Dipeptidyl peptidase 3 (738 aa).

Position 2 is an N-acetylalanine (Ala2). His450 serves as a coordination point for Zn(2+). Glu451 is a catalytic residue. Positions 455 and 508 each coordinate Zn(2+).

The protein belongs to the peptidase M49 family. It depends on Zn(2+) as a cofactor.

The protein resides in the cytoplasm. It localises to the cytosol. It carries out the reaction Release of an N-terminal dipeptide from a peptide comprising four or more residues, with broad specificity. Also acts on dipeptidyl 2-naphthylamides.. Its function is as follows. Cleaves and degrades bioactive peptides, including angiotensin, Leu-enkephalin and Met-enkephalin. Also cleaves Arg-Arg-beta-naphthylamide (in vitro). The polypeptide is Dipeptidyl peptidase 3 (Dpp3) (Mus musculus (Mouse)).